We begin with the raw amino-acid sequence, 281 residues long: MRILKSLAELRRWRQQQSEVALVPTMGNLHDGHLQLVKTALERCDNVVVSIFVNPMQFGANEDLDSYPRTLEADCQALDALGVSAVFTPQVNDVYPRGLDKQTRIEVPGISDILCGASRPGHFTGVATIVCKLFNMVQPQLAVFGEKDYQQLQVIRLMVQDLSLPVEVLGTATQRETSGLAMSSRNGYLSTEQKHQAAELYKTLEETKAKLSVNTDFGELEAAAKEKLTQAGFVPDYFSIRNAADLQEATPEDHEWVILAAAFMGKTRLIDNLRVTNAAAK.

Residue 26-33 participates in ATP binding; the sequence is MGNLHDGH. The active-site Proton donor is the histidine 33. Glutamine 57 provides a ligand contact to (R)-pantoate. Glutamine 57 contributes to the beta-alanine binding site. 145–148 is a binding site for ATP; the sequence is GEKD. Glutamine 151 contacts (R)-pantoate. 182–185 serves as a coordination point for ATP; it reads MSSR.

Belongs to the pantothenate synthetase family. As to quaternary structure, homodimer.

The protein resides in the cytoplasm. It carries out the reaction (R)-pantoate + beta-alanine + ATP = (R)-pantothenate + AMP + diphosphate + H(+). Its pathway is cofactor biosynthesis; (R)-pantothenate biosynthesis; (R)-pantothenate from (R)-pantoate and beta-alanine: step 1/1. Functionally, catalyzes the condensation of pantoate with beta-alanine in an ATP-dependent reaction via a pantoyl-adenylate intermediate. The polypeptide is Pantothenate synthetase (Idiomarina loihiensis (strain ATCC BAA-735 / DSM 15497 / L2-TR)).